Consider the following 836-residue polypeptide: MMSEYWIISAPGDKTCQQTYDTMNNLTSKQHNLCNNYKFHIPDLKVGTLDQLVGLSDDLGKLDTYVEQITRKVANYLGEVLEDQRDKLHENLMANNSPGPPDDSMPCRHHQRIKHLSLRHQRKHQHTHHQNKPQHYHHHHHHHQLPQDLKGKSAATCSPATPPAPASAPPHLPPACACDVLAPGSLTGGSLTNLSTSHEPEPEFDVCPCDECFACAPPSTSATASTLLADECYSQTASSMLSATRCALSTVAAIATGSGLGNGPSTSAAAAAAASNSSGGGGGGGPASCSTLCSSAYFSTSAPTTSSSVHSSMSRSNSKRLNNNTCSINNNKLSFRSGSHVSQLHLATQQPQHHHSHPHQQPHTNPLQSPVQKSMSEDEGDASNAHEDGETDEDPKSPHSVQSDLSDAFDWWFNKPKRNSKKSSAQQQHETAQLQHQQTTQQHATPLTPQNHNQYQNQHLSKAMTFWHQASTTPRSSYRSFFNSLADQIYSKRSTPSQLNINNGFNLTPTHRSSPVSSCCGSSSQGRSSPDTDPAEPPEFPLSPAELPQYLTRFQWDMAKYPIKQSLRNIADIISKQIGQIDGDLKTKSQAYNNLKGNLQNLEKKKTGSLLTRNLADLVKKEHFILDSEYLTTLLVIVPKVMANDWLTNYEKITDMIVPRSSQLIQEDADYCLFNVTLFKKVAEEFKLHARERKFIVRDFVYNEEELAAGKNEMTKLMTDKKKQFGPLVRWLKVNFSEAFCALIHVKALRVFVESVLRYGLPVNFQAILIEPNKKSVKRLRDVLNQLYGHLDGASAGGAVSSADNVDIPGLGFGQSEYFPYVFYKVNIDMVEQAKV.

A compositionally biased stretch (basic residues) spans 116 to 144 (LSLRHQRKHQHTHHQNKPQHYHHHHHHHQ). 4 disordered regions span residues 116–169 (LSLR…ASAP), 302–403 (APTT…SVQS), 415–453 (KPKR…QNHN), and 496–544 (PSQL…PLSP). Residues 160 to 169 (ATPPAPASAP) are compositionally biased toward pro residues. The span at 302-316 (APTTSSSVHSSMSRS) shows a compositional bias: low complexity. Composition is skewed to polar residues over residues 319–348 (KRLN…HLAT) and 364–374 (TNPLQSPVQKS). The span at 425–450 (AQQQHETAQLQHQQTTQQHATPLTPQ) shows a compositional bias: low complexity. Polar residues predominate over residues 496–511 (PSQLNINNGFNLTPTH). Residues 512 to 529 (RSSPVSSCCGSSSQGRSS) are compositionally biased toward low complexity.

The protein belongs to the V-ATPase C subunit family. As to quaternary structure, V-ATPase is a heteromultimeric enzyme made up of two complexes: the ATP-hydrolytic V1 complex and the proton translocation V0 complex. The V1 complex consists of three catalytic AB heterodimers that form a heterohexamer, three peripheral stalks each consisting of EG heterodimers, one central rotor including subunits D and F, and the regulatory subunits C and H. The proton translocation complex V0 consists of the proton transport subunit a, a ring of proteolipid subunits c9c'', rotary subunit d, subunits e and f, and the accessory subunits VhaAC45 and ATP6AP2. In terms of tissue distribution, in larvae, expressed in the ring gland, CNS, imaginal disks and lymph gland.

Its function is as follows. Subunit of the V1 complex of vacuolar(H+)-ATPase (V-ATPase), a multisubunit enzyme composed of a peripheral complex (V1) that hydrolyzes ATP and a membrane integral complex (V0) that translocates protons. V-ATPase is responsible for acidifying and maintaining the pH of intracellular compartments and in some cell types, is targeted to the plasma membrane, where it is responsible for acidifying the extracellular environment. Subunit C is necessary for the assembly of the catalytic sector of the enzyme and is likely to have a specific function in its catalytic activity. In enterocytes, acts as part of a pHCl-2 sensory pathway which mediates Tor-dependent larval growth and metabolism in response to zinc availability. Likely acts in maintaining enterocyte lysosomal acidification which consequently promotes Tor activation at the lysosome membrane. This Drosophila melanogaster (Fruit fly) protein is V-type proton ATPase subunit C (Vha44).